The primary structure comprises 209 residues: Large ribosomal subunit protein uL4 (209 aa).

The interval 44-77 (QRQGTHKSKERSEVSGSTRKLIRQKGGGGARRGD) is disordered.

The protein belongs to the universal ribosomal protein uL4 family. In terms of assembly, part of the 50S ribosomal subunit.

Its function is as follows. One of the primary rRNA binding proteins, this protein initially binds near the 5'-end of the 23S rRNA. It is important during the early stages of 50S assembly. It makes multiple contacts with different domains of the 23S rRNA in the assembled 50S subunit and ribosome. In terms of biological role, forms part of the polypeptide exit tunnel. In Parabacteroides distasonis (strain ATCC 8503 / DSM 20701 / CIP 104284 / JCM 5825 / NCTC 11152), this protein is Large ribosomal subunit protein uL4.